The chain runs to 109 residues: Phosphoribosyl-ATP pyrophosphatase (109 aa).

Belongs to the PRA-PH family.

It is found in the cytoplasm. It carries out the reaction 1-(5-phospho-beta-D-ribosyl)-ATP + H2O = 1-(5-phospho-beta-D-ribosyl)-5'-AMP + diphosphate + H(+). It functions in the pathway amino-acid biosynthesis; L-histidine biosynthesis; L-histidine from 5-phospho-alpha-D-ribose 1-diphosphate: step 2/9. The chain is Phosphoribosyl-ATP pyrophosphatase from Azorhizobium caulinodans (strain ATCC 43989 / DSM 5975 / JCM 20966 / LMG 6465 / NBRC 14845 / NCIMB 13405 / ORS 571).